We begin with the raw amino-acid sequence, 257 residues long: Phosphate import ATP-binding protein PstB (257 aa).

Positions Leu4 to Ile252 constitute an ABC transporter domain. An ATP-binding site is contributed by Gly36–Ser43.

This sequence belongs to the ABC transporter superfamily. Phosphate importer (TC 3.A.1.7) family. The complex is composed of two ATP-binding proteins (PstB), two transmembrane proteins (PstC and PstA) and a solute-binding protein (PstS).

The protein localises to the cell membrane. It carries out the reaction phosphate(out) + ATP + H2O = ADP + 2 phosphate(in) + H(+). Part of the ABC transporter complex PstSACB involved in phosphate import. Responsible for energy coupling to the transport system. This chain is Phosphate import ATP-binding protein PstB, found in Corynebacterium efficiens (strain DSM 44549 / YS-314 / AJ 12310 / JCM 11189 / NBRC 100395).